A 469-amino-acid chain; its full sequence is DNA polymerase delta subunit 2 (469 aa).

N-acetylmethionine is present on Met1. Ser257 carries the phosphoserine modification.

The protein belongs to the DNA polymerase delta/II small subunit family. In terms of assembly, component of both the DNA polymerase delta and DNA polymerase zeta complexes. Component of the tetrameric DNA polymerase delta complex (Pol-delta4), which consists of POLD1/p125, POLD2/p50, POLD3/p66/p68 and POLD4/p12, with POLD1 bearing DNA polymerase and 3' to 5' proofreading exonuclease activities. Within Pol-delta4, directly interacts with POLD1, POLD3 and POLD4. Following stress caused by DNA damaging agents or by replication stress, POLD4 is degraded and Pol-delta4 is converted into a trimeric form of the complex (Pol-delta3), which consists of POLD1, POLD2 and POLD3. Pol-delta3 is the major form occurring at S phase replication sites, as well as DNA damage sites. Also observed as a dimeric complex with POLD2 (Pol-delta2 complex). Pol-delta2 is relatively insensitive to the PCNA stimulation (2-5-fold) compared to Pol-delta4 that is stimulated by over 50-fold. Contrary to the other components of Pol-delta4, does not directly interact with PCNA. As POLD1 and POLD4, directly interacts with WRNIP1; this interaction stimulates DNA polymerase delta-mediated DNA synthesis, independently of the presence of PCNA. This stimulation may be due predominantly to an increase of initiation frequency and also to increased processivity. Directly interacts with POLDIP2 and POLDIP3. Directly interacts with KCTD13/PDIP1; in the presence of PCNA, this interaction may stimulate DNA polymerase activity. Component of the tetrameric Pol-zeta complex (Pol-zeta4), which consists of REV3L, MAD2L2, POLD2 and POLD3, with REV3L bearing DNA polymerase catalytic activity. Interacts with KCTD10.

It localises to the nucleus. Accessory component of both the DNA polymerase delta complex and the DNA polymerase zeta complex. As a component of the trimeric and tetrameric DNA polymerase delta complexes (Pol-delta3 and Pol-delta4, respectively), plays a role in high fidelity genome replication, including in lagging strand synthesis, and repair. Pol-delta3 and Pol-delta4 are characterized by the absence or the presence of POLD4. They exhibit differences in catalytic activity. Most notably, Pol-delta3 shows higher proofreading activity than Pol-delta4. Although both Pol-delta3 and Pol-delta4 process Okazaki fragments in vitro, Pol-delta3 may also be better suited to fulfill this task, exhibiting near-absence of strand displacement activity compared to Pol-delta4 and stalling on encounter with the 5'-blocking oligonucleotides. Pol-delta3 idling process may avoid the formation of a gap, while maintaining a nick that can be readily ligated. Along with DNA polymerase kappa, DNA polymerase delta carries out approximately half of nucleotide excision repair (NER) synthesis following UV irradiation. Under conditions of DNA replication stress, required for the repair of broken replication forks through break-induced replication (BIR). Involved in the translesion synthesis (TLS) of templates carrying O6-methylguanine or abasic sites performed by Pol-delta4, independently of DNA polymerase zeta (REV3L) or eta (POLH). Facilitates abasic site bypass by DNA polymerase delta by promoting extension from the nucleotide inserted opposite the lesion. Also involved in TLS as a component of the DNA polymerase zeta complex. Along with POLD3, dramatically increases the efficiency and processivity of DNA synthesis of the DNA polymerase zeta complex compared to the minimal zeta complex, consisting of only REV3L and REV7. The polypeptide is DNA polymerase delta subunit 2 (Pold2) (Mus musculus (Mouse)).